Reading from the N-terminus, the 231-residue chain is Probable septum site-determining protein MinC (231 aa).

Belongs to the MinC family. Interacts with MinD and FtsZ.

In terms of biological role, cell division inhibitor that blocks the formation of polar Z ring septums. Rapidly oscillates between the poles of the cell to destabilize FtsZ filaments that have formed before they mature into polar Z rings. Prevents FtsZ polymerization. The polypeptide is Probable septum site-determining protein MinC (Bradyrhizobium diazoefficiens (strain JCM 10833 / BCRC 13528 / IAM 13628 / NBRC 14792 / USDA 110)).